The following is a 122-amino-acid chain: Large ribosomal subunit protein uL14 (122 aa).

The protein belongs to the universal ribosomal protein uL14 family. As to quaternary structure, part of the 50S ribosomal subunit. Forms a cluster with proteins L3 and L19. In the 70S ribosome, L14 and L19 interact and together make contacts with the 16S rRNA in bridges B5 and B8.

Functionally, binds to 23S rRNA. Forms part of two intersubunit bridges in the 70S ribosome. The chain is Large ribosomal subunit protein uL14 from Alcanivorax borkumensis (strain ATCC 700651 / DSM 11573 / NCIMB 13689 / SK2).